The following is a 525-amino-acid chain: Protein disulfide-isomerase A2 (525 aa).

A signal peptide spans 1 to 21 (MSRQLLPVLLLLLLRASCPWG). The 126-residue stretch at 27–152 (RSPSEEPPEE…IAEWLRRRVG (126 aa)) folds into the Thioredoxin 1 domain. Active-site nucleophile residues include Cys71 and Cys74. Cys71 and Cys74 are disulfide-bonded. Residues Asn127 and Asn284 are each glycosylated (N-linked (GlcNAc...) asparagine). Residues 367-496 (VLNGQVKPYL…FSKFLDNGGV (130 aa)) enclose the Thioredoxin 2 domain. Residues Cys418 and Cys421 each act as nucleophile in the active site. A disulfide bridge connects residues Cys418 and Cys421. The tract at residues 492 to 525 (DNGGVLPTEEPPEEPAAPFPEPPANSTMGSKEEL) is disordered. The segment covering 505–514 (EPAAPFPEPP) has biased composition (pro residues). Asn516 carries an N-linked (GlcNAc...) asparagine glycan. Polar residues predominate over residues 516–525 (NSTMGSKEEL). Residues 522–525 (KEEL) carry the Prevents secretion from ER motif.

The protein belongs to the protein disulfide isomerase family. Monomer; predominantly as monomer under reducing conditions. Homodimer; disulfide-linked. Part of a large chaperone multiprotein complex comprising DNAJB11, HSP90B1, HSPA5, HYOU, PDIA2, PDIA4, PDIA6, PPIB, SDF2L1, UGGT1 and very small amounts of ERP29, but not, or at very low levels, CALR nor CANX. Post-translationally, the disulfide-linked homodimer exhibits an enhanced chaperone activity. Glycosylated. As to expression, highly expressed in pancreas (at protein level).

It localises to the endoplasmic reticulum lumen. It carries out the reaction Catalyzes the rearrangement of -S-S- bonds in proteins.. Functionally, acts as an intracellular estrogen-binding protein. May be involved in modulating cellular levels and biological functions of estrogens in the pancreas. May act as a chaperone that inhibits aggregation of misfolded proteins. In Homo sapiens (Human), this protein is Protein disulfide-isomerase A2 (PDIA2).